We begin with the raw amino-acid sequence, 230 residues long: Sugar fermentation stimulation protein homolog (230 aa).

The protein belongs to the SfsA family.

This Ruegeria pomeroyi (strain ATCC 700808 / DSM 15171 / DSS-3) (Silicibacter pomeroyi) protein is Sugar fermentation stimulation protein homolog.